A 243-amino-acid polypeptide reads, in one-letter code: Venom nerve growth factor 1 (243 aa).

The signal sequence occupies residues 1–18 (MSMLCYTLIIAFLIGIWA). Residues 19-125 (VPKSEDNAPL…ALNRNIRAKR (107 aa)) constitute a propeptide that is removed on maturation. Disulfide bonds link Cys-139–Cys-204, Cys-182–Cys-232, and Cys-192–Cys-234. Residue Asn-148 is glycosylated (N-linked (GlcNAc...) asparagine).

Belongs to the NGF-beta family. As to quaternary structure, homodimer; non-covalently linked. Expressed by the venom gland.

The protein localises to the secreted. Functionally, nerve growth factor is important for the development and maintenance of the sympathetic and sensory nervous systems. It stimulates division and differentiation of sympathetic and embryonic sensory neurons as well as basal forebrain cholinergic neurons in the brain. Its relevance in the snake venom is not clear. However, it has been shown to inhibit metalloproteinase-dependent proteolysis of platelet glycoprotein Ib alpha, suggesting a metalloproteinase inhibition to prevent metalloprotease autodigestion and/or protection against prey proteases. Binds a lipid between the two protein chains in the homodimer. The lipid-bound form promotes histamine relase from mouse mast cells, contrary to the lipid-free form. In Naja sputatrix (Malayan spitting cobra), this protein is Venom nerve growth factor 1.